The sequence spans 480 residues: Aspartyl/glutamyl-tRNA(Asn/Gln) amidotransferase subunit B (480 aa).

The protein belongs to the GatB/GatE family. GatB subfamily. As to quaternary structure, heterotrimer of A, B and C subunits.

The catalysed reaction is L-glutamyl-tRNA(Gln) + L-glutamine + ATP + H2O = L-glutaminyl-tRNA(Gln) + L-glutamate + ADP + phosphate + H(+). The enzyme catalyses L-aspartyl-tRNA(Asn) + L-glutamine + ATP + H2O = L-asparaginyl-tRNA(Asn) + L-glutamate + ADP + phosphate + 2 H(+). Allows the formation of correctly charged Asn-tRNA(Asn) or Gln-tRNA(Gln) through the transamidation of misacylated Asp-tRNA(Asn) or Glu-tRNA(Gln) in organisms which lack either or both of asparaginyl-tRNA or glutaminyl-tRNA synthetases. The reaction takes place in the presence of glutamine and ATP through an activated phospho-Asp-tRNA(Asn) or phospho-Glu-tRNA(Gln). This chain is Aspartyl/glutamyl-tRNA(Asn/Gln) amidotransferase subunit B, found in Streptococcus pneumoniae (strain Hungary19A-6).